Reading from the N-terminus, the 1041-residue chain is Importin-9 (1041 aa).

Ala-2 carries the N-acetylalanine modification. The Importin N-terminal domain maps to Ala-43 to Glu-119. A disordered region spans residues Gln-936–Gly-967. The span at Ser-943 to Gly-964 shows a compositional bias: acidic residues.

This sequence belongs to the importin beta family. In terms of assembly, interacts with histones H2A, H2B, H3 and H4. The binding is coupled to RanGTP cycles. Interacts with AKIRIN2; promoting association with pre-assembled proteasomes. Associates with pre-assembled proteasomes; interaction is indirect and mediated via interaction with AKIRIN2. Interacts with PPP2R1A and PPP2R1B.

The protein resides in the cytoplasm. It is found in the nucleus. Functionally, nuclear transport receptor that mediates nuclear import of proteins, such as histones, proteasome and actin. Serves as receptor for nuclear localization signals (NLS) in cargo substrates. Is thought to mediate docking of the importin/substrate complex to the nuclear pore complex (NPC) through binding to nucleoporin and the complex is subsequently translocated through the pore by an energy requiring, Ran-dependent mechanism. At the nucleoplasmic side of the NPC, Ran binds to the importin, the importin/substrate complex dissociates and importin is re-exported from the nucleus to the cytoplasm where GTP hydrolysis releases Ran. The directionality of nuclear import is thought to be conferred by an asymmetric distribution of the GTP- and GDP-bound forms of Ran between the cytoplasm and nucleus. Mediates the import of pre-assembled proteasomes into the nucleus; AKIRIN2 acts as a molecular bridge between IPO9 and the proteasome complex. Mediates the nuclear import of histones H2A, H2B, H4 and H4. In addition to nuclear import, also acts as a chaperone for histones by preventing inappropriate non-nucleosomal interactions. Mediates the nuclear import of actin. The sequence is that of Importin-9 from Homo sapiens (Human).